The primary structure comprises 362 residues: Ferredoxin--NADP reductase, leaf-type isozyme, chloroplastic (362 aa).

The segment at 1–20 is disordered; sequence MATAVSAAVSLPSSKSTSFS. The N-terminal 62 residues, 1 to 62, are a transit peptide targeting the chloroplast; the sequence is MATAVSAAVS…RAQVTTEAPA (62 aa). Low complexity predominate over residues 10-20; the sequence is SLPSSKSTSFS. The 123-residue stretch at 83–205 folds into the FAD-binding FR-type domain; the sequence is KEPYVGRCLL…TGPVGKEMLM (123 aa). Residues 141–144, 162–164, Tyr-168, 179–181, and Thr-220 each bind FAD; these read RLYS, CVK, and VCS. Ser-144 and Lys-164 together coordinate NADP(+). Residues Thr-220, 252–253, 282–283, Lys-292, 321–322, and Glu-360 each bind NADP(+); these read VP, SR, and GL.

The protein belongs to the ferredoxin--NADP reductase type 1 family. FAD is required as a cofactor.

It localises to the plastid. The protein resides in the chloroplast stroma. It is found in the chloroplast thylakoid membrane. It carries out the reaction 2 reduced [2Fe-2S]-[ferredoxin] + NADP(+) + H(+) = 2 oxidized [2Fe-2S]-[ferredoxin] + NADPH. It participates in energy metabolism; photosynthesis. Functionally, may play a key role in regulating the relative amounts of cyclic and non-cyclic electron flow to meet the demands of the plant for ATP and reducing power. The sequence is that of Ferredoxin--NADP reductase, leaf-type isozyme, chloroplastic (PETH) from Nicotiana tabacum (Common tobacco).